We begin with the raw amino-acid sequence, 96 residues long: uncharacterized protein (96 aa).

Positions methionine 1 to arginine 18 are enriched in basic and acidic residues. Positions methionine 1–glutamine 96 are disordered. Residues glutamine 28–threonine 46 are compositionally biased toward polar residues. Basic and acidic residues predominate over residues threonine 70 to glutamine 96.

This is an uncharacterized protein from Caenorhabditis elegans.